We begin with the raw amino-acid sequence, 102 residues long: Small ribosomal subunit protein uS10 (102 aa).

It belongs to the universal ribosomal protein uS10 family. Part of the 30S ribosomal subunit.

Involved in the binding of tRNA to the ribosomes. The protein is Small ribosomal subunit protein uS10 of Heliobacterium modesticaldum (strain ATCC 51547 / Ice1).